The sequence spans 557 residues: Probable serine/threonine-protein kinase WNK7 (557 aa).

Residues 28–285 form the Protein kinase domain; the sequence is IRYKEVIGKG…AEELLLDSFL (258 aa). ATP contacts are provided by residues 108 to 111 and Lys-158; that span reads TELF. Asp-175 functions as the Proton acceptor in the catalytic mechanism. Residues 451-477 show a composition bias toward polar residues; sequence QNQSSKDNHQNGASSQAGESISHSLSS. Positions 451-517 are disordered; the sequence is QNQSSKDNHQ…EEEEDERLKE (67 aa). Ser-505 is subject to Phosphoserine.

This sequence belongs to the protein kinase superfamily. Ser/Thr protein kinase family. WNK subfamily.

The enzyme catalyses L-seryl-[protein] + ATP = O-phospho-L-seryl-[protein] + ADP + H(+). It carries out the reaction L-threonyl-[protein] + ATP = O-phospho-L-threonyl-[protein] + ADP + H(+). In terms of biological role, may regulate flowering time by modulating the photoperiod pathway. This chain is Probable serine/threonine-protein kinase WNK7 (WNK7), found in Arabidopsis thaliana (Mouse-ear cress).